The chain runs to 88 residues: YcgL domain-containing protein CGSHiGG_01115 (88 aa).

The YcgL domain maps to 1-85 (MLCAIYKSKK…QDDGLFNSLS (85 aa)).

The chain is YcgL domain-containing protein CGSHiGG_01115 from Haemophilus influenzae (strain PittGG).